Here is a 95-residue protein sequence, read N- to C-terminus: MNPKHWGRAVWTIIFIVLSQAGLDGNIEACKRKLYTIVSTLPCPACRRHATIAIEDNNVMSSDDLNYIYYFFIRLFNNLASDPKYAIDVSKVKPL.

The Intravirion segment spans residues 1–8 (MNPKHWGR). Residues 1–95 (MNPKHWGRAV…AIDVSKVKPL (95 aa)) form the ERV/ALR sulfhydryl oxidase domain. Residues 9-25 (AVWTIIFIVLSQAGLDG) form a helical membrane-spanning segment. Residues 26-95 (NIEACKRKLY…AIDVSKVKPL (70 aa)) are Virion surface-facing. A disulfide bridge connects residues Cys43 and Cys46.

This sequence belongs to the orthopoxvirus OPG072 family. Interacts with OPG128; this interaction involves formation of a transient disulfide-bonded intermediate, allowing disulfide bond transfer. It depends on FAD as a cofactor.

Its subcellular location is the virion membrane. It localises to the host cytoplasm. The enzyme catalyses 2 R'C(R)SH + O2 = R'C(R)S-S(R)CR' + H2O2. Functionally, FAD-dependent sulfhydryl oxidase that catalyzes disulfide bond formation. The complete pathway for formation of disulfide bonds in intracellular virion membrane proteins sequentially involves thiol-disulfide transfer between OPG072, OPG128 and OPG088. The polypeptide is Probable FAD-linked sulfhydryl oxidase OPG072 (OPG072) (Vaccinia virus (strain Copenhagen) (VACV)).